The following is a 331-amino-acid chain: Putative heme-binding peroxidase (331 aa).

The Proton acceptor role is filled by His-50. His-174 contacts heme b. The Tryptophan radical intermediate role is filled by Trp-190. Residues 288–331 (INTDNQKGGYRSAPKKSDSTPATSGQPGASKTGGCPVMHHKAKL) form a disordered region. Residues 306-316 (STPATSGQPGA) are compositionally biased toward polar residues.

This sequence belongs to the peroxidase family. Cytochrome c peroxidase subfamily. The cofactor is heme b.

Destroys radicals which are normally produced within the cells and which are toxic to biological systems. This is Putative heme-binding peroxidase from Gibberella zeae (strain ATCC MYA-4620 / CBS 123657 / FGSC 9075 / NRRL 31084 / PH-1) (Wheat head blight fungus).